Reading from the N-terminus, the 831-residue chain is Periplasmic nitrate reductase (831 aa).

Positions 1 to 31 form a signal peptide, tat-type signal; the sequence is MTISRRDLLKAQAAGIAAMAANIPLSSQAPA. One can recognise a 4Fe-4S Mo/W bis-MGD-type domain in the interval 41-97; the sequence is ITWSKAPCRFCGTGCGVMVGVKEGRVVATHGDLLAEVNRGLNCVKGYFLSKIMYGAD. Residues cysteine 48, cysteine 51, cysteine 55, and cysteine 83 each contribute to the [4Fe-4S] cluster site. Mo-bis(molybdopterin guanine dinucleotide) is bound by residues lysine 85, glutamine 152, asparagine 177, cysteine 181, 214–221, 245–249, 264–266, methionine 375, glutamine 379, asparagine 485, 511–512, lysine 534, aspartate 561, and 721–730; these read WGSNMAEM, STFTH, GTD, SD, and TGRVLEHWHS. Tryptophan 797 serves as a coordination point for substrate. Mo-bis(molybdopterin guanine dinucleotide) is bound by residues asparagine 805 and lysine 822.

Belongs to the prokaryotic molybdopterin-containing oxidoreductase family. NasA/NapA/NarB subfamily. Component of the periplasmic nitrate reductase NapAB complex composed of NapA and NapB. The cofactor is [4Fe-4S] cluster. Mo-bis(molybdopterin guanine dinucleotide) serves as cofactor. In terms of processing, predicted to be exported by the Tat system. The position of the signal peptide cleavage has not been experimentally proven.

It localises to the periplasm. The catalysed reaction is 2 Fe(II)-[cytochrome] + nitrate + 2 H(+) = 2 Fe(III)-[cytochrome] + nitrite + H2O. In terms of biological role, catalytic subunit of the periplasmic nitrate reductase complex NapAB. Receives electrons from NapB and catalyzes the reduction of nitrate to nitrite. The polypeptide is Periplasmic nitrate reductase (Paracoccus pantotrophus (Thiosphaera pantotropha)).